A 395-amino-acid polypeptide reads, in one-letter code: 8-amino-7-oxononanoate synthase (395 aa).

R24 contacts substrate. 111–112 serves as a coordination point for pyridoxal 5'-phosphate; sequence GF. Substrate is bound at residue H136. Residues S184, 209–212, and 240–243 each bind pyridoxal 5'-phosphate; these read DDAH and TLSK. At K243 the chain carries N6-(pyridoxal phosphate)lysine. Residue T357 participates in substrate binding.

It belongs to the class-II pyridoxal-phosphate-dependent aminotransferase family. BioF subfamily. Homodimer. Pyridoxal 5'-phosphate is required as a cofactor.

The catalysed reaction is 6-carboxyhexanoyl-[ACP] + L-alanine + H(+) = (8S)-8-amino-7-oxononanoate + holo-[ACP] + CO2. Its pathway is cofactor biosynthesis; biotin biosynthesis. Functionally, catalyzes the decarboxylative condensation of pimeloyl-[acyl-carrier protein] and L-alanine to produce 8-amino-7-oxononanoate (AON), [acyl-carrier protein], and carbon dioxide. In Alkaliphilus metalliredigens (strain QYMF), this protein is 8-amino-7-oxononanoate synthase.